The chain runs to 1059 residues: Ceruloplasmin (1059 aa).

A signal peptide spans 1–19 (MKFLLLSALLFLHSSLAWT). Plastocyanin-like domains follow at residues 20 to 199 (REKH…LILC), 208 to 356 (KEEN…VRDC), 369 to 554 (HVRH…MKIC), 564 to 712 (RQKD…VNQC), 724 to 894 (GERT…LIVC), and 902 to 1055 (FNPK…PNQE). Na(+) contacts are provided by Y55, G64, and Y67. The Cu(2+) site is built by H120 and H122. H120 provides a ligand contact to O2. K128 contributes to the Ca(2+) binding site. N138 is a glycosylation site (N-linked (GlcNAc...) asparagine). Q143, D146, and D147 together coordinate Ca(2+). The cysteines at positions 173 and 199 are disulfide-linked. Cu(2+) is bound by residues H179 and H181. Residue H179 participates in O2 binding. N226 is a glycosylation site (N-linked (GlcNAc...) asparagine). A Na(+)-binding site is contributed by S255. C275 and C356 are oxidised to a cystine. Residues H294, C337, and H342 each contribute to the Cu(2+) site. A glycan (N-linked (GlcNAc...) asparagine) is linked at N396. Residues F407, G416, and Y419 each contribute to the Na(+) site. The cysteines at positions 528 and 554 are disulfide-linked. A glycan (N-linked (GlcNAc...) asparagine) is linked at N582. Position 611 (S611) interacts with Na(+). A disulfide bridge connects residues C631 and C712. Residues H650, C693, H698, and M703 each coordinate Cu(2+). The active-site Nucleophile; for glutathione peroxidase activity is C693. N756 is a glycosylation site (N-linked (GlcNAc...) asparagine). Na(+) is bound by residues F761, G770, and Y773. C868 and C894 form a disulfide bridge. A glycan (N-linked (GlcNAc...) asparagine) is linked at N920. S949 is a binding site for Na(+). Cu(2+) contacts are provided by H988, H991, H993, H1033, C1034, H1035, H1039, and M1044. The O2 site is built by H991 and H993. H1035 contributes to the O2 binding site.

The protein belongs to the multicopper oxidase family. In terms of assembly, found in a complex with MPO and LTF; interacts directly with MPO and LTF, which allows Fe(3+) incorporation into LTF, activation of CP ferroxidase activity and protection of CP antioxidant properties by MPO. It depends on Cu(2+) as a cofactor. In terms of tissue distribution, synthesized in liver and secreted into the plasma. Also choroid plexus, yolk sac, placenta, and testis; not in stomach and small intestine. Fetal lung and liver.

It localises to the secreted. It catalyses the reaction 4 Fe(2+) + O2 + 4 H(+) = 4 Fe(3+) + 2 H2O. The enzyme catalyses 4 Cu(+) + O2 + 4 H(+) = 4 Cu(2+) + 2 H2O. The catalysed reaction is a hydroperoxide + 2 glutathione = an alcohol + glutathione disulfide + H2O. It carries out the reaction 4 nitric oxide + O2 + 2 H2O = 4 nitrite + 4 H(+). It catalyses the reaction 2 glutathione + H2O2 = glutathione disulfide + 2 H2O. Its function is as follows. Multifunctional blue, copper-binding (6-7 atoms per molecule) glycoprotein. It has ferroxidase activity oxidizing Fe(2+) to Fe(3+) without releasing radical oxygen species. It is involved in iron transport across the cell membrane. Copper ions provide a large number of enzymatic activites. Oxidizes highly toxic ferrous ions to the ferric state for further incorporation onto apo-transferrins, catalyzes Cu(+) oxidation and promotes the oxidation of biogenic amines such as norepinephrin and serotonin. Provides Cu(2+) ions for the ascorbate-mediated deaminase degradation of the heparan sulfate chains of GPC1. Has glutathione peroxidase-like activity, can remove both hydrogen peroxide and lipid hydroperoxide in the presence of thiols. Also shows NO-oxidase and NO2 synthase activities that determine endocrine NO homeostasis. In Rattus norvegicus (Rat), this protein is Ceruloplasmin (Cp).